Reading from the N-terminus, the 378-residue chain is uncharacterized protein (378 aa).

Cys-16 acts as the For GATase activity in catalysis. The Glutamine amidotransferase type-2 domain occupies 16–378 (CGLFGVIDRS…ELAKQLSEVE (363 aa)).

This is an uncharacterized protein from Archaeoglobus fulgidus (strain ATCC 49558 / DSM 4304 / JCM 9628 / NBRC 100126 / VC-16).